The primary structure comprises 547 residues: GMP synthase [glutamine-hydrolyzing] (547 aa).

The region spanning 12–210 (KVLILDFGSQ…VLEIAGAKPD (199 aa)) is the Glutamine amidotransferase type-1 domain. Cys-89 functions as the Nucleophile in the catalytic mechanism. Catalysis depends on residues His-184 and Glu-186. In terms of domain architecture, GMPS ATP-PPase spans 211-403 (WIMRDHIEEA…LGLPPEMVYR (193 aa)). Residue 238 to 244 (SGGVDSS) coordinates ATP.

Homodimer.

The catalysed reaction is XMP + L-glutamine + ATP + H2O = GMP + L-glutamate + AMP + diphosphate + 2 H(+). Its pathway is purine metabolism; GMP biosynthesis; GMP from XMP (L-Gln route): step 1/1. Catalyzes the synthesis of GMP from XMP. The protein is GMP synthase [glutamine-hydrolyzing] of Ralstonia nicotianae (strain ATCC BAA-1114 / GMI1000) (Ralstonia solanacearum).